The chain runs to 317 residues: Transmembrane and death domain protein 1 (317 aa).

The N-terminal stretch at 1–27 is a signal peptide; the sequence is MAARTLASALVLTLWVWALAPAGAVDA. At 28–218 the chain is on the extracellular side; it reads MGPHAAVRLA…ERSPMGWAGP (191 aa). Residues 62 to 73 are compositionally biased toward basic and acidic residues; sequence ELSRLSEDRLAR. The interval 62–106 is disordered; the sequence is ELSRLSEDRLARPEPLNTTSGSPSRRRRREAAEDPAGRVAGPGEV. Residues 66–150 enclose the Death domain; sequence LSEDRLARPE…DVARELGKNL (85 aa). Residue Asn78 is glycosylated (N-linked (GlcNAc...) asparagine). Residues 219–239 traverse the membrane as a helical segment; sequence LALGLLTGFVGALGTGALVVL. At 240-317 the chain is on the cytoplasmic side; sequence LTLWITGGDG…SWGSGALDGL (78 aa).

The protein resides in the membrane. The polypeptide is Transmembrane and death domain protein 1 (Homo sapiens (Human)).